We begin with the raw amino-acid sequence, 447 residues long: Signal recognition particle 54 kDa protein (447 aa).

GTP contacts are provided by residues 103 to 110 (GVQGSGKT), 185 to 189 (DTAGR), and 245 to 248 (TKMD).

Belongs to the GTP-binding SRP family. SRP54 subfamily. In terms of assembly, part of the signal recognition particle protein translocation system, which is composed of SRP and FtsY. Archaeal SRP consists of a 7S RNA molecule of 300 nucleotides and two protein subunits: SRP54 and SRP19.

It is found in the cytoplasm. It catalyses the reaction GTP + H2O = GDP + phosphate + H(+). Functionally, involved in targeting and insertion of nascent membrane proteins into the cytoplasmic membrane. Binds to the hydrophobic signal sequence of the ribosome-nascent chain (RNC) as it emerges from the ribosomes. The SRP-RNC complex is then targeted to the cytoplasmic membrane where it interacts with the SRP receptor FtsY. This is Signal recognition particle 54 kDa protein from Saccharolobus islandicus (strain M.16.27) (Sulfolobus islandicus).